The sequence spans 392 residues: Streptogrisin-D (392 aa).

The first 64 residues, 1 to 64 (MCVSRRRNSG…AGFTFQTANA (64 aa)), serve as a signal peptide directing secretion. The propeptide occupies 65-204 (SDDVPAFGAK…NRTAGEFTPL (140 aa)). Cys-218 and Cys-238 are disulfide-bonded. Catalysis depends on charge relay system residues His-237, Asp-266, and Ser-348. An intrachain disulfide couples Cys-342 to Cys-369.

This sequence belongs to the peptidase S1 family. Homodimer.

In terms of biological role, has a primary specificity for large aliphatic or aromatic amino acids. In Streptomyces griseus, this protein is Streptogrisin-D (sprD).